A 261-amino-acid chain; its full sequence is Cytochrome c oxidase subunit 3 (261 aa).

The Mitochondrial matrix segment spans residues 1–15 (MTHQTHAYHMVNPSP). Residues 16-34 (WPLTGALSALLMTSGLIMW) form a helical membrane-spanning segment. The Mitochondrial intermembrane segment spans residues 35 to 40 (FHFNST). A helical transmembrane segment spans residues 41–66 (TLLTLGLTTNMLTMYQWWRDVIREST). Over 67 to 72 (FQGHHT) the chain is Mitochondrial matrix. The helical transmembrane segment at 73–105 (PTVQKGLRYGMILFIISEVLFFTGFFWAFYHSS) threads the bilayer. At 106–128 (LAPTPELGGCWPPTGIHPLNPLE) the chain is on the mitochondrial intermembrane side. A helical membrane pass occupies residues 129 to 152 (VPLLNTSVLLASGVSITWAHHSLM). Over 153–155 (EGN) the chain is Mitochondrial matrix. A helical membrane pass occupies residues 156 to 183 (RNPMLQALFITIALGIYFTLLQASEYYE). Residues 184-190 (APFTISD) are Mitochondrial intermembrane-facing. Residues 191 to 223 (GVYGSTFFVATGFHGLHVIIGSTFLIVCFFRQL) form a helical membrane-spanning segment. Residues 224–232 (KFHFTSNHH) lie on the Mitochondrial matrix side of the membrane. A helical transmembrane segment spans residues 233–256 (FGFEAAAWYWHFVDVVWLFLYVSI). Residues 257 to 261 (YWWGS) lie on the Mitochondrial intermembrane side of the membrane.

This sequence belongs to the cytochrome c oxidase subunit 3 family. Component of the cytochrome c oxidase (complex IV, CIV), a multisubunit enzyme composed of 14 subunits. The complex is composed of a catalytic core of 3 subunits MT-CO1, MT-CO2 and MT-CO3, encoded in the mitochondrial DNA, and 11 supernumerary subunits COX4I, COX5A, COX5B, COX6A, COX6B, COX6C, COX7A, COX7B, COX7C, COX8 and NDUFA4, which are encoded in the nuclear genome. The complex exists as a monomer or a dimer and forms supercomplexes (SCs) in the inner mitochondrial membrane with NADH-ubiquinone oxidoreductase (complex I, CI) and ubiquinol-cytochrome c oxidoreductase (cytochrome b-c1 complex, complex III, CIII), resulting in different assemblies (supercomplex SCI(1)III(2)IV(1) and megacomplex MCI(2)III(2)IV(2)).

The protein localises to the mitochondrion inner membrane. The catalysed reaction is 4 Fe(II)-[cytochrome c] + O2 + 8 H(+)(in) = 4 Fe(III)-[cytochrome c] + 2 H2O + 4 H(+)(out). Component of the cytochrome c oxidase, the last enzyme in the mitochondrial electron transport chain which drives oxidative phosphorylation. The respiratory chain contains 3 multisubunit complexes succinate dehydrogenase (complex II, CII), ubiquinol-cytochrome c oxidoreductase (cytochrome b-c1 complex, complex III, CIII) and cytochrome c oxidase (complex IV, CIV), that cooperate to transfer electrons derived from NADH and succinate to molecular oxygen, creating an electrochemical gradient over the inner membrane that drives transmembrane transport and the ATP synthase. Cytochrome c oxidase is the component of the respiratory chain that catalyzes the reduction of oxygen to water. Electrons originating from reduced cytochrome c in the intermembrane space (IMS) are transferred via the dinuclear copper A center (CU(A)) of subunit 2 and heme A of subunit 1 to the active site in subunit 1, a binuclear center (BNC) formed by heme A3 and copper B (CU(B)). The BNC reduces molecular oxygen to 2 water molecules using 4 electrons from cytochrome c in the IMS and 4 protons from the mitochondrial matrix. This is Cytochrome c oxidase subunit 3 (MT-CO3) from Madoqua guentheri (Guenther's dik-dik).